The sequence spans 187 residues: Flavin prenyltransferase LpdB (187 aa).

FMN-binding positions include 10–12 (GAS), serine 37, 88–91 (SMKT), and arginine 123. Tyrosine 153 and lysine 169 together coordinate dimethylallyl phosphate.

The protein belongs to the UbiX/PAD1 family.

It carries out the reaction dimethylallyl phosphate + FMNH2 = prenylated FMNH2 + phosphate. Its function is as follows. Involved in tannin degradation. Flavin prenyltransferase that catalyzes the synthesis of the prenylated FMN cofactor (prenyl-FMN) for gallate decarboxylase LpdC. The prenyltransferase is metal-independent and links a dimethylallyl moiety from dimethylallyl monophosphate (DMAP) to the flavin N5 and C6 atoms of FMN. The sequence is that of Flavin prenyltransferase LpdB from Lactiplantibacillus plantarum (strain ATCC BAA-793 / NCIMB 8826 / WCFS1) (Lactobacillus plantarum).